Consider the following 314-residue polypeptide: UDP-glucose 4-epimerase (314 aa).

NAD(+) contacts are provided by residues 11–12 (FI), 31–36 (DNFATG), 56–57 (DI), and 77–81 (LAAQI). Substrate contacts are provided by Ser-121 and Tyr-146. NAD(+)-binding residues include Tyr-146 and Lys-150. Residue Tyr-146 is the Proton acceptor of the active site. Residues Asn-175, 189–190 (VV), 204–206 (RVF), Arg-213, and 271–274 (RLGD) contribute to the substrate site.

Belongs to the NAD(P)-dependent epimerase/dehydratase family. Homodimer. Requires NAD(+) as cofactor.

It catalyses the reaction UDP-alpha-D-glucose = UDP-alpha-D-galactose. It functions in the pathway carbohydrate metabolism; galactose metabolism. In terms of biological role, involved in the metabolism of galactose. Catalyzes the conversion of UDP-galactose (UDP-Gal) to UDP-glucose (UDP-Glc) through a mechanism involving the transient reduction of NAD. This Mycobacterium tuberculosis (strain CDC 1551 / Oshkosh) protein is UDP-glucose 4-epimerase (galE1).